The primary structure comprises 90 residues: Small ribosomal subunit protein bS16 (90 aa).

It belongs to the bacterial ribosomal protein bS16 family.

The sequence is that of Small ribosomal subunit protein bS16 from Streptococcus agalactiae serotype III (strain NEM316).